A 166-amino-acid polypeptide reads, in one-letter code: Interferon gamma (166 aa).

Residues 1 to 23 (MNYTSFILAFQLCAILGSSTYYC) form the signal peptide. Gln24 bears the Pyrrolidone carboxylic acid mark. Residues Asn39 and Asn106 are each glycosylated (N-linked (GlcNAc...) asparagine). Residues 147 to 166 (ANLRKRKRSQNPFRGRRALQ) are disordered. The segment covering 148–166 (NLRKRKRSQNPFRGRRALQ) has biased composition (basic residues).

The protein belongs to the type II (or gamma) interferon family. In terms of assembly, homodimer. Interacts with IFNGR1 (via extracellular domain); this interaction promotes IFNGR1 dimerization. Released primarily from activated T lymphocytes.

It localises to the secreted. Type II interferon produced by immune cells such as T-cells and NK cells that plays crucial roles in antimicrobial, antiviral, and antitumor responses by activating effector immune cells and enhancing antigen presentation. Primarily signals through the JAK-STAT pathway after interaction with its receptor IFNGR1 to affect gene regulation. Upon IFNG binding, IFNGR1 intracellular domain opens out to allow association of downstream signaling components JAK2, JAK1 and STAT1, leading to STAT1 activation, nuclear translocation and transcription of IFNG-regulated genes. Many of the induced genes are transcription factors such as IRF1 that are able to further drive regulation of a next wave of transcription. Plays a role in class I antigen presentation pathway by inducing a replacement of catalytic proteasome subunits with immunoproteasome subunits. In turn, increases the quantity, quality, and repertoire of peptides for class I MHC loading. Increases the efficiency of peptide generation also by inducing the expression of activator PA28 that associates with the proteasome and alters its proteolytic cleavage preference. Up-regulates as well MHC II complexes on the cell surface by promoting expression of several key molecules such as cathepsins B/CTSB, H/CTSH, and L/CTSL. Participates in the regulation of hematopoietic stem cells during development and under homeostatic conditions by affecting their development, quiescence, and differentiation. The polypeptide is Interferon gamma (IFNG) (Equus asinus (Donkey)).